The chain runs to 388 residues: S-adenosylmethionine synthase (388 aa).

H16 is a binding site for ATP. D18 contacts Mg(2+). E44 contacts K(+). Positions 57 and 100 each coordinate L-methionine. Residues Q100–R110 are flexible loop. ATP contacts are provided by residues D165 to K167, D240, R246 to K247, A263, and K267. D240 contributes to the L-methionine binding site. Position 271 (K271) interacts with L-methionine.

This sequence belongs to the AdoMet synthase family. As to quaternary structure, homotetramer; dimer of dimers. Requires Mg(2+) as cofactor. K(+) serves as cofactor.

It is found in the cytoplasm. It catalyses the reaction L-methionine + ATP + H2O = S-adenosyl-L-methionine + phosphate + diphosphate. It functions in the pathway amino-acid biosynthesis; S-adenosyl-L-methionine biosynthesis; S-adenosyl-L-methionine from L-methionine: step 1/1. In terms of biological role, catalyzes the formation of S-adenosylmethionine (AdoMet) from methionine and ATP. The overall synthetic reaction is composed of two sequential steps, AdoMet formation and the subsequent tripolyphosphate hydrolysis which occurs prior to release of AdoMet from the enzyme. The protein is S-adenosylmethionine synthase of Acinetobacter baumannii (strain AYE).